Consider the following 39-residue polypeptide: Photosystem II reaction center protein L (39 aa).

Residues 18 to 38 (SLYLGLLLVFVMGILFSSYFF) traverse the membrane as a helical segment.

Belongs to the PsbL family. As to quaternary structure, PSII is composed of 1 copy each of membrane proteins PsbA, PsbB, PsbC, PsbD, PsbE, PsbF, PsbH, PsbI, PsbJ, PsbK, PsbL, PsbM, PsbT, PsbX, PsbY, Psb30/Ycf12, peripheral proteins PsbO, CyanoQ (PsbQ), PsbU, PsbV and a large number of cofactors. It forms dimeric complexes.

It localises to the cellular thylakoid membrane. In terms of biological role, one of the components of the core complex of photosystem II (PSII). PSII is a light-driven water:plastoquinone oxidoreductase that uses light energy to abstract electrons from H(2)O, generating O(2) and a proton gradient subsequently used for ATP formation. It consists of a core antenna complex that captures photons, and an electron transfer chain that converts photonic excitation into a charge separation. This subunit is found at the monomer-monomer interface and is required for correct PSII assembly and/or dimerization. This chain is Photosystem II reaction center protein L, found in Prochlorococcus marinus (strain NATL2A).